We begin with the raw amino-acid sequence, 767 residues long: MAPDSGSFPEGPPLKLLPVDTRDRGTQRCRLGPTALRALGAHLGSAVKISLPDGGSCLCTAWPRRDGADGFVQLDPQCTSPGSAVGAPGSGGIINLNRLRLVPCPPLRSLAVWPELREQAGASGAPSPAAVLEAVQELLRNRPVSQGYVVAAPPGAPGPVAALHIVSGAPSPNPAGLVTPRTHISLSEVPPSEEEPQPEVPLGGLSEAADSLRELLRLPLRYPRALASLGLEVPRGVLLAGPPGVGKTQLVRAVARETGAELLAVSAPALQGARPGETEENVRRIFKRARELASRRPTLLFLDEVDALCPRRGGPHQAPESRVVAQVLTLLDGIGEDREVVVVGSTNRPDALDPALRRPGRFDREVVIGTPTLRQRKAILQVITSKMPISGQVDLNLLAEMTVGYVGADLTALCREAAMQALLHSEKNQDNPTIDETDFLEAFKKIQPSSFRSVIGVTDIKPVGWEQIGGLEDVKLKLKQSIEWPLKFPREFVRMGLTQPKGVLLYGPPGCAKTTLVRALATSCRCSFVSVSGADLFSPFVGDSEKILSQVFRQARANTPAIVFLDEIDSILGSRSISRTECNVQDRVLSVLLNELDGVGLKTIERRGSKSDQHGKCKQLEKNEELEFQEIFNSNVIVVAATNRPDVLDDALLRPGRLDKIIYIPPPDEKGRLSILKVCTKNTPMGPDVSLEKVAAETCFFSGADLGNLCKEAALLALQENGLEVTTVKQEHFLESLKTVKPSLSHKDLTLYKNLFQKKEFSILEDI.

Met1 carries the N-acetylmethionine modification. ATP is bound by residues 241-248 (GPPGVGKT) and 507-514 (GPPGCAKT).

It belongs to the AAA ATPase family. AFG2 subfamily. Part of the 55LCC heterohexameric ATPase complex composed at least of AIRIM, AFG2A, AFG2B and CINP. Associates with pre-60S ribosomal particles.

The protein localises to the cytoplasm. The protein resides in the cytoskeleton. Its subcellular location is the spindle. It is found in the nucleus. The catalysed reaction is ATP + H2O = ADP + phosphate + H(+). Its activity is regulated as follows. In the context of 55LCC heterohexameric ATPase complex, the ATPase activity is stimulated by DNA binding and inhibited in presence of RNA. ATP-dependent chaperone part of the 55LCC heterohexameric ATPase complex which is chromatin-associated and promotes replisome proteostasis to maintain replication fork progression and genome stability. Required for replication fork progression, sister chromatid cohesion, and chromosome stability. The ATPase activity is specifically enhanced by replication fork DNA and is coupled to cysteine protease-dependent cleavage of replisome substrates in response to replication fork damage. Uses ATPase activity to process replisome substrates in S-phase, facilitating their proteolytic turnover from chromatin to ensure DNA replication and mitotic fidelity. Plays an essential role in the cytoplasmic maturation steps of pre-60S ribosomal particles by promoting the release of shuttling protein RSL24D1/RLP24 from the pre-ribosomal particles. The chain is ATPase family gene 2 protein homolog B (AFG2B) from Bos taurus (Bovine).